The following is a 295-amino-acid chain: MADNDRDGWDPASGVGLSATEGAAARAVVGRRKTPLVRDPFAEPLVCAVGVDSLTRLAQQSGVDGESGFAIPRMVDWIAARTRFFDDYFNAGQTDGIRQSVILGAGLDSRTYRLPWLPGATVYEIDQPGVVEFKNETMDRLQAQPLADRRPVAADLRGDWAPPLRIRGFDPSLPTMWSAEGLLPYLRAEDQMQVLDEISALSSKGSRLAADTVDDIGELAARIALSRGPRNPVAESDADLGGASSSHAVAQRLQSHGWLSNTRPAPQLFAAYAMPPLAEDQELYRKITVVTAMLR.

Residues Asp126 and 155–156 (DL) contribute to the S-adenosyl-L-methionine site.

The protein belongs to the UPF0677 family.

Exhibits S-adenosyl-L-methionine-dependent methyltransferase activity. This chain is Putative S-adenosyl-L-methionine-dependent methyltransferase Mvan_0910, found in Mycolicibacterium vanbaalenii (strain DSM 7251 / JCM 13017 / BCRC 16820 / KCTC 9966 / NRRL B-24157 / PYR-1) (Mycobacterium vanbaalenii).